We begin with the raw amino-acid sequence, 342 residues long: Polygalacturonase inhibitor 1 (342 aa).

The N-terminal stretch at 1–29 (MTQFNIPVTMSSSLSIILVILVSLRTALS) is a signal peptide. Disulfide bonds link Cys-32–Cys-62 and Cys-63–Cys-72. An N-linked (GlcNAc...) asparagine glycan is attached at Asn-64. LRR repeat units follow at residues 82–107 (NNLD…LPYL), 108–132 (NFLY…LTQL), 133–156 (HYLY…IKTL), 157–180 (VTLD…LPNL), 181–205 (GGIT…SKLF), 206–228 (TAMT…NLNL), 229–252 (AFVD…DKNT), 253–275 (KKIH…SKNL), 276–299 (NGLD…LKFL), and 300–319 (QSLN…GGNL). An N-linked (GlcNAc...) asparagine glycan is attached at Asn-141. Asn-303 carries N-linked (GlcNAc...) asparagine glycosylation. 2 disulfides stabilise this stretch: Cys-310/Cys-332 and Cys-334/Cys-341.

This sequence belongs to the polygalacturonase-inhibiting protein family.

Its subcellular location is the secreted. It is found in the cell wall. The protein localises to the membrane. In terms of biological role, inhibitor of fungal polygalacturonase. It is an important factor for plant resistance to phytopathogenic fungi. Substrate preference is polygalacturonase (PG) from A.niger &gt;&gt; PG of F.oxysporum, A.solani or B.cinerea. Not active on PG from F.moniliforme. The protein is Polygalacturonase inhibitor 1 (PGIP1) of Phaseolus vulgaris (Kidney bean).